The following is a 387-amino-acid chain: TSC22 domain family protein 4 (387 aa).

Disordered stretches follow at residues 1–85 and 135–232; these read MSGG…GEPY and ISTP…RRDG. Residues 31–51 show a composition bias toward pro residues; sequence PVPPALAGPPPRLPNGDPNPD. Residue threonine 57 is modified to Phosphothreonine. A phosphoserine mark is found at serine 62 and serine 165. Threonine 183 is subject to Phosphothreonine. Phosphoserine is present on residues serine 187, serine 189, and serine 219. Threonine 223 is modified (phosphothreonine). Phosphoserine is present on residues serine 254, serine 258, and serine 271. The tract at residues 336–357 is leucine-zipper; the sequence is LKEQIRDLAERNAALEQENGLL. Phosphoserine is present on serine 362. The interval 368-387 is disordered; it reads QLPSSGLPRLGPSAPNGPSI.

The protein belongs to the TSC-22/Dip/Bun family. Forms a homodimer or heterodimer. Forms a heterodimer with TSC22D1 isoforms 1 and 2. Interacts with NRBP1. As to expression, expressed in the liver (at protein level). Expressed in Purkinje cells and proliferating cerebellar granular neurons (at protein level). Expressed in the cortex, medulla and papilla of the kidney.

The protein resides in the nucleus. Its subcellular location is the cytoplasm. It is found in the cell projection. It localises to the dendrite. The protein localises to the synapse. Binds DNA and acts as a transcriptional repressor. Involved in the regulation of systematic glucose homeostasis and insulin sensitivity, via transcriptional repression of downstream insulin signaling targets such as OBP2A/LCN13. Acts as a negative regulator of lipogenic gene expression in hepatocytes and thereby mediates the control of very low-density lipoprotein release. May play a role in neurite elongation and survival. In Mus musculus (Mouse), this protein is TSC22 domain family protein 4.